A 63-amino-acid polypeptide reads, in one-letter code: MFTLKKSLLLLFFLGTINLSLCEQERDADEEERRDDDEMDVEVEKRFLPLFLPKIICAITKKC.

A signal peptide spans 1–22; that stretch reads MFTLKKSLLLLFFLGTINLSLC. The propeptide at 23–44 is removed in mature form; the sequence is EQERDADEEERRDDDEMDVEVE. C57 and C63 are disulfide-bonded.

The protein belongs to the frog skin active peptide (FSAP) family. Brevinin subfamily. Expressed by the skin glands.

Its subcellular location is the secreted. Its function is as follows. Antimicrobial peptide. Active against some Gram-negative and a variety of Gram-positive bacterial strains. Active against fungus C.glabrata 090902 but not against C.neoformans 201211. Shows hemolytic activity against human erythrocytes. This is Jingdongin-1-MT1 from Amolops mantzorum (Sichuan torrent frog).